We begin with the raw amino-acid sequence, 199 residues long: Rho-related protein racG (199 aa).

Positions 13, 15, 16, 17, 18, 32, and 35 each coordinate GTP. Thr-17 contacts Mg(2+). 2 consecutive short sequence motifs (switch) follow at residues 26–37 (NAFPNEYIPTVF) and 57–75 (DTAG…YPST). Thr-35 contributes to the Mg(2+) binding site. Residues Lys-116, Asp-118, and Ala-159 each coordinate GTP. Cys-196 bears the Cysteine methyl ester mark. A lipid anchor (S-geranylgeranyl cysteine) is attached at Cys-196. Residues 197 to 199 (SLF) constitute a propeptide, removed in mature form.

It belongs to the small GTPase superfamily. Rho family. The cofactor is Mg(2+).

It localises to the cell membrane. It is found in the cytoplasm. Its subcellular location is the cytoskeleton. The catalysed reaction is GTP + H2O = GDP + phosphate + H(+). Regulated by guanine nucleotide exchange factors (GEFs) which promote the exchange of bound GDP for free GTP, GTPase activating proteins (GAPs) which increase the GTP hydrolysis activity, and GDP dissociation inhibitors which inhibit the dissociation of the nucleotide from the GTPase. Functionally, small GTPase which cycles between active GTP-bound and inactive GDP-bound states. Involved in actin cytoskeleton remodeling during capping of surface receptors and uroid formation. In Entamoeba histolytica (strain ATCC 30459 / HM-1:IMSS / ABRM), this protein is Rho-related protein racG.